A 403-amino-acid polypeptide reads, in one-letter code: Argininosuccinate synthase (403 aa).

ATP contacts are provided by residues 10–18 (AYSGGVDTS) and alanine 38. Tyrosine 89 is an L-citrulline binding site. Glycine 119 is an ATP binding site. Threonine 121, asparagine 125, and aspartate 126 together coordinate L-aspartate. Asparagine 125 contacts L-citrulline. L-citrulline-binding residues include arginine 129, serine 177, serine 186, glutamate 262, and tyrosine 274.

It belongs to the argininosuccinate synthase family. Type 1 subfamily. In terms of assembly, homotetramer.

It is found in the cytoplasm. It catalyses the reaction L-citrulline + L-aspartate + ATP = 2-(N(omega)-L-arginino)succinate + AMP + diphosphate + H(+). The protein operates within amino-acid biosynthesis; L-arginine biosynthesis; L-arginine from L-ornithine and carbamoyl phosphate: step 2/3. In Parasynechococcus marenigrum (strain WH8102), this protein is Argininosuccinate synthase.